The primary structure comprises 428 residues: Glutamate-1-semialdehyde 2,1-aminomutase 1 (428 aa).

N6-(pyridoxal phosphate)lysine is present on K267.

Belongs to the class-III pyridoxal-phosphate-dependent aminotransferase family. HemL subfamily. As to quaternary structure, homodimer. It depends on pyridoxal 5'-phosphate as a cofactor.

It localises to the cytoplasm. It carries out the reaction (S)-4-amino-5-oxopentanoate = 5-aminolevulinate. It functions in the pathway porphyrin-containing compound metabolism; protoporphyrin-IX biosynthesis; 5-aminolevulinate from L-glutamyl-tRNA(Glu): step 2/2. This Staphylococcus aureus (strain bovine RF122 / ET3-1) protein is Glutamate-1-semialdehyde 2,1-aminomutase 1.